Reading from the N-terminus, the 1550-residue chain is Cellulose synthase 1 (1550 aa).

Positions 1 to 741 (MPEVRSSTQS…KERVLKGTVK (741 aa)) are catalytic. The next 3 membrane-spanning stretches (helical) occupy residues 26 to 46 (GAGLTIGVFGLCALIAATSVT), 47 to 67 (LPPEQQLIVAFVCVVIFFIVG), and 106 to 126 (GLLGTMLLVAELYALMMLFLS). The interval 147–240 (EWPTVDIFVP…YILIFDCDHV (94 aa)) is catalytic subdomain A. Residue Asp189 is part of the active site. 2 residues coordinate substrate: Asp236 and Asp238. The catalytic subdomain B stretch occupies residues 317–377 (TAIEQIGGFA…GQRVRWARGM (61 aa)). Residue Asp333 is part of the active site. The next 5 membrane-spanning stretches (helical) occupy residues 398-418 (LCYLSAMTSFLFAVPRVIFLS), 423-443 (FLFFGQNIIAASPLALLAYAI), 468-488 (VYETTMALFLVRVTIVTLLSP), 507-527 (FDLGAVYPNIILGLIMFGGLA), and 547-567 (LLNSAWAMLSLIIILAAIAVG). One can recognise a PilZ domain in the interval 572–647 (QKRNSHRIPA…PARIIRAGNG (76 aa)). Disordered regions lie at residues 711–734 (SSPTKPLAGNALSDDTNNPSRKER) and 768–813 (APAH…QPLA). The segment at 742-1550 (MVSLLALLTF…KQLEDERRKS (809 aa)) is cyclic di-GMP binding domain. The span at 768 to 796 (APAHQPEASDLPPLPALLPATSGAAQAGA) shows a compositional bias: low complexity. Residues 1513-1533 (VLLVGLLGCILIVSVLARALA) form a helical membrane-spanning segment.

It in the N-terminal section; belongs to the glycosyltransferase 2 family. This sequence in the C-terminal section; belongs to the AcsB/BcsB family. Requires Mg(2+) as cofactor.

The protein localises to the cell inner membrane. The catalysed reaction is [(1-&gt;4)-beta-D-glucosyl](n) + UDP-alpha-D-glucose = [(1-&gt;4)-beta-D-glucosyl](n+1) + UDP + H(+). It functions in the pathway glycan metabolism; bacterial cellulose biosynthesis. With respect to regulation, activated by c-di-GMP. Functionally, bifunctional protein comprised of a catalytic subunit and a regulatory subunit. The catalytic subunit of cellulose synthase polymerizes uridine 5'-diphosphate glucose to cellulose in a processive way. The thick cellulosic mats generated by this enzyme probably provide a specialized protective environment to the bacterium. The regulatory subunit binds bis-(3'-5') cyclic diguanylic acid (c-di-GMP). This is Cellulose synthase 1 (acsAB) from Komagataeibacter xylinus (Gluconacetobacter xylinus).